The primary structure comprises 146 residues: Large ribosomal subunit protein uL15 (146 aa).

The disordered stretch occupies residues 1-51 (MKLHELKPAKGSRKVRNRVGRGTSSGNGKTSGRGQKGQKARSGGGVRLGFE). The span at 10–19 (KGSRKVRNRV) shows a compositional bias: basic residues. Composition is skewed to gly residues over residues 23-35 (TSSG…GRGQ) and 42-51 (SGGGVRLGFE).

Belongs to the universal ribosomal protein uL15 family. Part of the 50S ribosomal subunit.

In terms of biological role, binds to the 23S rRNA. The chain is Large ribosomal subunit protein uL15 from Streptococcus equi subsp. equi (strain 4047).